A 737-amino-acid polypeptide reads, in one-letter code: Methylcrotonoyl-CoA carboxylase subunit alpha, mitochondrial (737 aa).

A mitochondrion-targeting transit peptide spans 1 to 33 (MASRLLLLPRRRSRHGGASLLLARLLSSSSSEA). The Biotin carboxylation domain maps to 38-485 (AVEKVLVANR…DTHFIERYQN (448 aa)). Residues lysine 153, 185–246 (ANKI…PRHI), glutamate 237, and histidine 272 each bind ATP. One can recognise an ATP-grasp domain in the interval 157 to 355 (KRIMGAAGVP…LVEWQIRIAN (199 aa)). Positions 312, 326, and 328 each coordinate Mn(2+). Residue arginine 330 is part of the active site. The tract at residues 636-665 (YRQTLRAEQSPDDSSQPSASSEARSHPKGS) is disordered. Positions 647-657 (DDSSQPSASSE) are enriched in low complexity. Positions 656–732 (SEARSHPKGS…FDSSVLFTVK (77 aa)) constitute a Biotinyl-binding domain. Residue lysine 698 is modified to N6-biotinyllysine.

In terms of assembly, probably a heterodimer composed of biotin-containing alpha subunits and beta subunits. Biotin is required as a cofactor. The cofactor is Mn(2+).

The protein resides in the mitochondrion matrix. It catalyses the reaction 3-methylbut-2-enoyl-CoA + hydrogencarbonate + ATP = 3-methyl-(2E)-glutaconyl-CoA + ADP + phosphate + H(+). It functions in the pathway amino-acid degradation; L-leucine degradation; (S)-3-hydroxy-3-methylglutaryl-CoA from 3-isovaleryl-CoA: step 2/3. Functionally, biotin-attachment subunit of the 3-methylcrotonyl-CoA carboxylase, an enzyme that catalyzes the conversion of 3-methylcrotonyl-CoA to 3-methylglutaconyl-CoA, a critical step for leucine and isovaleric acid catabolism. The sequence is that of Methylcrotonoyl-CoA carboxylase subunit alpha, mitochondrial (MCCA) from Oryza sativa subsp. japonica (Rice).